The sequence spans 361 residues: Probable dual-specificity RNA methyltransferase RlmN (361 aa).

Glu91 (proton acceptor) is an active-site residue. The Radical SAM core domain maps to 97–329 (QHYGLSVCVT…KKKGGNCVVR (233 aa)). A disulfide bridge connects residues Cys104 and Cys340. Residues Cys111, Cys115, and Cys118 each contribute to the [4Fe-4S] cluster site. S-adenosyl-L-methionine is bound by residues 163-164 (GE), Ser195, 218-220 (SLH), and Asn296. Cys340 (S-methylcysteine intermediate) is an active-site residue.

It belongs to the radical SAM superfamily. RlmN family. Requires [4Fe-4S] cluster as cofactor.

Its subcellular location is the cytoplasm. It carries out the reaction adenosine(2503) in 23S rRNA + 2 reduced [2Fe-2S]-[ferredoxin] + 2 S-adenosyl-L-methionine = 2-methyladenosine(2503) in 23S rRNA + 5'-deoxyadenosine + L-methionine + 2 oxidized [2Fe-2S]-[ferredoxin] + S-adenosyl-L-homocysteine. It catalyses the reaction adenosine(37) in tRNA + 2 reduced [2Fe-2S]-[ferredoxin] + 2 S-adenosyl-L-methionine = 2-methyladenosine(37) in tRNA + 5'-deoxyadenosine + L-methionine + 2 oxidized [2Fe-2S]-[ferredoxin] + S-adenosyl-L-homocysteine. Specifically methylates position 2 of adenine 2503 in 23S rRNA and position 2 of adenine 37 in tRNAs. This chain is Probable dual-specificity RNA methyltransferase RlmN, found in Streptococcus pneumoniae (strain P1031).